Consider the following 150-residue polypeptide: MTLQLNTIALLLVILLILGVLSNNSTITISAAVLLIMQQTFLSSHIPLLEKYGVKIGIIILTIGVLSPLVSGKIQLPDLSGFLSWKMALSISVGVLVAWLAGKGVPLMGEQPILVTGLLIGTIIGVAFLGGIPVGPLIAAGILALLLGKI.

The next 4 helical transmembrane spans lie at 1 to 21 (MTLQ…LGVL), 52 to 72 (YGVK…LVSG), 81 to 101 (GFLS…AWLA), and 123 to 143 (IIGV…AGIL).

Belongs to the UPF0756 family.

The protein localises to the cell membrane. The protein is UPF0756 membrane protein HI_1074 of Haemophilus influenzae (strain ATCC 51907 / DSM 11121 / KW20 / Rd).